Consider the following 862-residue polypeptide: DNA topoisomerase 3-beta-1 (862 aa).

Residues 3 to 153 (TVLMVAEKPS…EKTVFRARFS (151 aa)) enclose the Toprim domain. A Topo IA-type catalytic domain is found at 171-593 (DHNEALSVDA…HTLDVFKRKF (423 aa)). Y336 (O-(5'-phospho-DNA)-tyrosine intermediate) is an active-site residue. Residues 821–851 (PMHRGGPGRRQGRGRGRARRPPGKPNPRRPK) are compositionally biased toward basic residues. A disordered region spans residues 821–854 (PMHRGGPGRRQGRGRGRARRPPGKPNPRRPKDKM).

Belongs to the type IA topoisomerase family. Isoform 1 is found in testis, heart and skeletal muscle. A 4 kb transcript which probably represents isoform 2 is found in thymus, kidney and pancreas.

The enzyme catalyses ATP-independent breakage of single-stranded DNA, followed by passage and rejoining.. Its function is as follows. Releases the supercoiling and torsional tension of DNA introduced during the DNA replication and transcription by transiently cleaving and rejoining one strand of the DNA duplex. Introduces a single-strand break via transesterification at a target site in duplex DNA. The scissile phosphodiester is attacked by the catalytic tyrosine of the enzyme, resulting in the formation of a DNA-(5'-phosphotyrosyl)-enzyme intermediate and the expulsion of a 3'-OH DNA strand. The free DNA strand than undergoes passage around the unbroken strand thus removing DNA supercoils. Finally, in the religation step, the DNA 3'-OH attacks the covalent intermediate to expel the active-site tyrosine and restore the DNA phosphodiester backbone. Possesses negatively supercoiled DNA relaxing activity. The protein is DNA topoisomerase 3-beta-1 (TOP3B) of Homo sapiens (Human).